Reading from the N-terminus, the 344-residue chain is Phosphoserine phosphatase (344 aa).

The ACT domain maps to 48-120 (VVTILGKDRV…ERLGLDIVMQ (73 aa)). Asp135 functions as the Nucleophile in the catalytic mechanism. Mg(2+) contacts are provided by Asp135 and Asp137. Asp137 serves as the catalytic Proton donor. Substrate-binding positions include Glu144, Arg180, 223–224 (SG), and Lys268. Asp291 contributes to the Mg(2+) binding site.

The protein belongs to the HAD-like hydrolase superfamily. SerB family. Mg(2+) serves as cofactor.

It catalyses the reaction O-phospho-L-serine + H2O = L-serine + phosphate. It carries out the reaction O-phospho-D-serine + H2O = D-serine + phosphate. It functions in the pathway amino-acid biosynthesis; L-serine biosynthesis; L-serine from 3-phospho-D-glycerate: step 3/3. This Archaeoglobus fulgidus (strain ATCC 49558 / DSM 4304 / JCM 9628 / NBRC 100126 / VC-16) protein is Phosphoserine phosphatase.